The chain runs to 487 residues: GTPase Der (487 aa).

EngA-type G domains follow at residues 3-167 (FTLA…EGFA) and 203-378 (LQIA…DIWN). GTP is bound by residues 9–16 (GRPNVGKS), 56–60 (DTAGL), 119–122 (NKAE), 209–216 (GRPNAGKS), 256–260 (DTAGM), and 321–324 (NKWD). A KH-like domain is found at 379 to 463 (RRITTARLNT…PIRLTMRGQG (85 aa)). Residues 451–487 (PGTPIRLTMRGQGDKNPFKERKFRTPSRLRKHLGKKD) form a disordered region. Basic residues predominate over residues 471-487 (RKFRTPSRLRKHLGKKD).

Belongs to the TRAFAC class TrmE-Era-EngA-EngB-Septin-like GTPase superfamily. EngA (Der) GTPase family. In terms of assembly, associates with the 50S ribosomal subunit.

GTPase that plays an essential role in the late steps of ribosome biogenesis. The chain is GTPase Der from Cereibacter sphaeroides (strain ATCC 17029 / ATH 2.4.9) (Rhodobacter sphaeroides).